A 305-amino-acid polypeptide reads, in one-letter code: NAD kinase (305 aa).

D76 serves as the catalytic Proton acceptor. Residues 76-77 (DG), 150-151 (ND), R161, and D180 contribute to the NAD(+) site.

This sequence belongs to the NAD kinase family. It depends on a divalent metal cation as a cofactor.

The protein resides in the cytoplasm. It carries out the reaction NAD(+) + ATP = ADP + NADP(+) + H(+). Functionally, involved in the regulation of the intracellular balance of NAD and NADP, and is a key enzyme in the biosynthesis of NADP. Catalyzes specifically the phosphorylation on 2'-hydroxyl of the adenosine moiety of NAD to yield NADP. This chain is NAD kinase, found in Treponema pallidum (strain Nichols).